The primary structure comprises 200 residues: Transcription elongation factor A protein-like 3 (200 aa).

Positions 1 to 19 are enriched in basic and acidic residues; that stretch reads MEEVRGENEGKLEKEGKPE. The disordered stretch occupies residues 1–200; it reads MEEVRGENEG…QRGLHDIPYL (200 aa). The segment covering 20–34 has biased composition (acidic residues); it reads DEVEPEDEEKSDEDE. S30 is subject to Phosphoserine. 3 stretches are compositionally biased toward basic and acidic residues: residues 47 to 85, 94 to 106, and 114 to 153; these read GKPEEEAKPDEQGQDEGKPEKQGKSDGEGKRQGESKPDS, RAAEKRPAEDYVP, and DRGTDDSPKNSQEDLQDRHVSSEEMMRECADMTRAQEELR.

It belongs to the TFS-II family. TFA subfamily.

The protein localises to the nucleus. Functionally, may be involved in transcriptional regulation. The polypeptide is Transcription elongation factor A protein-like 3 (Tceal3) (Mus musculus (Mouse)).